The chain runs to 145 residues: D-aminoacyl-tRNA deacylase (145 aa).

The Gly-cisPro motif, important for rejection of L-amino acids motif lies at 137–138 (GP).

The protein belongs to the DTD family. In terms of assembly, homodimer.

The protein localises to the cytoplasm. It carries out the reaction glycyl-tRNA(Ala) + H2O = tRNA(Ala) + glycine + H(+). The catalysed reaction is a D-aminoacyl-tRNA + H2O = a tRNA + a D-alpha-amino acid + H(+). Its function is as follows. An aminoacyl-tRNA editing enzyme that deacylates mischarged D-aminoacyl-tRNAs. Also deacylates mischarged glycyl-tRNA(Ala), protecting cells against glycine mischarging by AlaRS. Acts via tRNA-based rather than protein-based catalysis; rejects L-amino acids rather than detecting D-amino acids in the active site. By recycling D-aminoacyl-tRNA to D-amino acids and free tRNA molecules, this enzyme counteracts the toxicity associated with the formation of D-aminoacyl-tRNA entities in vivo and helps enforce protein L-homochirality. The chain is D-aminoacyl-tRNA deacylase from Francisella tularensis subsp. holarctica (strain LVS).